Consider the following 207-residue polypeptide: Large ribosomal subunit protein uL4 (207 aa).

Residues 62–85 (KKPFKQKGTGQARQGCRRAPQYPG) are disordered.

This sequence belongs to the universal ribosomal protein uL4 family. As to quaternary structure, part of the 50S ribosomal subunit.

Its function is as follows. One of the primary rRNA binding proteins, this protein initially binds near the 5'-end of the 23S rRNA. It is important during the early stages of 50S assembly. It makes multiple contacts with different domains of the 23S rRNA in the assembled 50S subunit and ribosome. Forms part of the polypeptide exit tunnel. The sequence is that of Large ribosomal subunit protein uL4 from Geobacter sp. (strain M21).